The sequence spans 326 residues: Virulence-associated V antigen (326 aa).

The protein localises to the secreted. Its function is as follows. Possibly involved in calcium regulation of YOP expression, which includes the export process. This is Virulence-associated V antigen (lcrV) from Yersinia pestis.